A 439-amino-acid polypeptide reads, in one-letter code: Enolase 1-1 (439 aa).

At threonine 85 the chain carries Phosphothreonine. Substrate is bound by residues histidine 159 and glutamate 168. Residue glutamate 211 is the Proton donor of the active site. Aspartate 246 is a binding site for Mg(2+). A phosphoserine mark is found at serine 249 and serine 250. The residue at position 253 (tyrosine 253) is a Phosphotyrosine. Substrate contacts are provided by glutamate 295 and aspartate 320. Residues glutamate 295 and aspartate 320 each contribute to the Mg(2+) site. The active-site Proton acceptor is the lysine 345. At serine 351 the chain carries Phosphoserine. Phosphothreonine is present on threonine 353. The residue at position 355 (serine 355) is a Phosphoserine. Substrate contacts are provided by residues 372–375 (SHRS) and lysine 396. Serine 421 is modified (phosphoserine).

Belongs to the enolase family. As to quaternary structure, homodimer. Mg(2+) is required as a cofactor.

The protein resides in the cytoplasm. The catalysed reaction is (2R)-2-phosphoglycerate = phosphoenolpyruvate + H2O. It functions in the pathway carbohydrate degradation; glycolysis; pyruvate from D-glyceraldehyde 3-phosphate: step 4/5. This chain is Enolase 1-1 (eno101), found in Schizosaccharomyces pombe (strain 972 / ATCC 24843) (Fission yeast).